A 444-amino-acid chain; its full sequence is E3 ubiquitin-protein ligase APD2 (444 aa).

Residues Met1–Pro15 show a composition bias toward low complexity. The segment at Met1–Pro41 is disordered. The segment covering Thr17 to Pro41 has biased composition (basic and acidic residues). The next 2 helical transmembrane spans lie at Val74–Gly94 and Ile312–Phe332. The segment at Cys393–Arg432 adopts an RING-type zinc-finger fold.

As to quaternary structure, interacts with At1g78040, At1g10650, VHA-c4/AVAP4, VHA-c''2/VMA16 and TUFA. As to expression, expressed in the shoot apical meristems (SAM), root tips, pollen and inflorescences.

Its subcellular location is the endomembrane system. It catalyses the reaction S-ubiquitinyl-[E2 ubiquitin-conjugating enzyme]-L-cysteine + [acceptor protein]-L-lysine = [E2 ubiquitin-conjugating enzyme]-L-cysteine + N(6)-ubiquitinyl-[acceptor protein]-L-lysine.. The protein operates within protein modification; protein ubiquitination. In terms of biological role, exhibits E2-dependent E3 ligase activity. Involved in pollen mitosis II (PMII) regulation during male gametogenesis. In Arabidopsis thaliana (Mouse-ear cress), this protein is E3 ubiquitin-protein ligase APD2.